Here is a 209-residue protein sequence, read N- to C-terminus: Glutathione S-transferase D1 (209 aa).

One can recognise a GST N-terminal domain in the interval 1–81 (MVDFYYLPGS…YLVEKYGKTD (81 aa)). Glutathione is bound by residues Ser-10, 51 to 53 (HTI), and 65 to 67 (ESR). Positions 87–208 (CPKKRAVINQ…AGCLEFKKYF (122 aa)) constitute a GST C-terminal domain.

The protein belongs to the GST superfamily. Delta family. In terms of assembly, homodimer.

It carries out the reaction RX + glutathione = an S-substituted glutathione + a halide anion + H(+). The catalysed reaction is 1,1,1-trichloro-2,2-bis(4-chlorophenyl)ethane = 1,1-dichloro-2,2-bis(4-chlorophenyl)ethylene + chloride + H(+). Functionally, conjugation of reduced glutathione to a wide number of exogenous and endogenous hydrophobic electrophiles. Has DDT dehydrochlorinase activity. May be involved in detoxification. This Drosophila melanogaster (Fruit fly) protein is Glutathione S-transferase D1.